We begin with the raw amino-acid sequence, 199 residues long: Mediator of RNA polymerase II transcription subunit 10 (199 aa).

It belongs to the Mediator complex subunit 10 family. In terms of assembly, component of the Mediator complex.

Its subcellular location is the nucleus. Component of the Mediator complex, a coactivator involved in the regulated transcription of nearly all RNA polymerase II-dependent genes. Mediator functions as a bridge to convey information from gene-specific regulatory proteins to the basal RNA polymerase II transcription machinery. Mediator is recruited to promoters by direct interactions with regulatory proteins and serves as a scaffold for the assembly of a functional preinitiation complex with RNA polymerase II and the general transcription factors. This chain is Mediator of RNA polymerase II transcription subunit 10 (NUT2), found in Candida glabrata (strain ATCC 2001 / BCRC 20586 / JCM 3761 / NBRC 0622 / NRRL Y-65 / CBS 138) (Yeast).